We begin with the raw amino-acid sequence, 689 residues long: Protein asunder (689 aa).

The stretch at 521–550 (NGARLKLSKAKDQYRLLYRELEQLIQLNAT) forms a coiled coil. Disordered regions lie at residues 591 to 619 (SPER…SKRR) and 665 to 689 (GTKD…SVRS). Over residues 599–614 (SSVGASGSSNSNSLLK) the composition is skewed to low complexity. The short motif at 613-619 (LKASKRR) is the Nuclear localization signal (NLS) element.

It belongs to the Integrator subunit 13 family. In terms of assembly, belongs to the multiprotein complex Integrator, at least composed of IntS1, IntS2, IntS3, IntS4, omd/IntS5, IntS6, defl/IntS7, IntS8, IntS9, IntS10, IntS11, IntS12, asun/IntS13, IntS14 and IntS15. The core complex associates with protein phosphatase 2A subunits mts/PP2A and Pp2A-29B, to form the Integrator-PP2A (INTAC) complex. Post-translationally, phosphorylated.

It is found in the nucleus. The protein localises to the cytoplasm. It localises to the perinuclear region. Functionally, component of the integrator complex, a multiprotein complex that terminates RNA polymerase II (Pol II) transcription in the promoter-proximal region of genes. The integrator complex provides a quality checkpoint during transcription elongation by driving premature transcription termination of transcripts that are unfavorably configured for transcriptional elongation: the complex terminates transcription by (1) catalyzing dephosphorylation of the C-terminal domain (CTD) of Pol II subunit Polr2A/Rbp1 and Spt5, and (2) degrading the exiting nascent RNA transcript via endonuclease activity. The integrator complex is also involved in the 3'-end processing of the U7 snRNA, and also the spliceosomal snRNAs U1, U2, U4 and U5. This chain is Protein asunder (asun), found in Drosophila sechellia (Fruit fly).